Consider the following 85-residue polypeptide: Small ribosomal subunit protein uS17 (85 aa).

It belongs to the universal ribosomal protein uS17 family. Part of the 30S ribosomal subunit.

Functionally, one of the primary rRNA binding proteins, it binds specifically to the 5'-end of 16S ribosomal RNA. The protein is Small ribosomal subunit protein uS17 of Pasteurella multocida (strain Pm70).